A 475-amino-acid polypeptide reads, in one-letter code: Probable sensor histidine kinase TcrY (475 aa).

Over 1 to 153 (MGITAATEMA…NVDATMLQML (153 aa)) the chain is Extracellular. A helical membrane pass occupies residues 154–174 (IIFGIVTVIALVAATTAGIVI). Residues 175–475 (IKRALAPLRR…GWQPLESSPR (301 aa)) lie on the Cytoplasmic side of the membrane. An HAMP domain is found at 176 to 238 (KRALAPLRRV…MLDHIAAALS (63 aa)). In terms of domain architecture, Histidine kinase spans 253-466 (DASHELRTPL…EFAVRLPLDG (214 aa)). His-256 bears the Phosphohistidine; by autocatalysis mark.

Homodimer. Requires a divalent metal cation as cofactor. In terms of processing, autophosphorylated.

The protein localises to the cell membrane. It carries out the reaction ATP + protein L-histidine = ADP + protein N-phospho-L-histidine.. Functionally, member of the two-component regulatory system TcrY/TcrX. Activates TcrX by phosphorylation. This Mycobacterium tuberculosis (strain ATCC 25618 / H37Rv) protein is Probable sensor histidine kinase TcrY (tcrY).